Consider the following 445-residue polypeptide: Tubulin beta chain (445 aa).

Q11, E69, S138, G142, T143, G144, N204, and N226 together coordinate GTP. E69 provides a ligand contact to Mg(2+).

This sequence belongs to the tubulin family. In terms of assembly, dimer of alpha and beta chains. A typical microtubule is a hollow water-filled tube with an outer diameter of 25 nm and an inner diameter of 15 nM. Alpha-beta heterodimers associate head-to-tail to form protofilaments running lengthwise along the microtubule wall with the beta-tubulin subunit facing the microtubule plus end conferring a structural polarity. Microtubules usually have 13 protofilaments but different protofilament numbers can be found in some organisms and specialized cells. It depends on Mg(2+) as a cofactor.

The protein resides in the cytoplasm. It localises to the cytoskeleton. Functionally, tubulin is the major constituent of microtubules, a cylinder consisting of laterally associated linear protofilaments composed of alpha- and beta-tubulin heterodimers. Microtubules grow by the addition of GTP-tubulin dimers to the microtubule end, where a stabilizing cap forms. Below the cap, tubulin dimers are in GDP-bound state, owing to GTPase activity of alpha-tubulin. This Schizophyllum commune (Split gill fungus) protein is Tubulin beta chain (TUB-2).